Reading from the N-terminus, the 809-residue chain is Zinc finger CCCH domain-containing protein 24 (809 aa).

M1 is modified (N-acetylmethionine). The disordered stretch occupies residues M1–T74. The span at E30 to D46 shows a compositional bias: polar residues. The span at V51 to N65 shows a compositional bias: basic and acidic residues. Residues W79 to A107 form a C3H1-type zinc finger. Q536 and E586 together coordinate S-adenosyl-L-methionine. Residues E652–K693 form a disordered region. Residues N678–T692 show a composition bias toward basic and acidic residues. D704 is an S-adenosyl-L-methionine binding site. C732 functions as the Nucleophile in the catalytic mechanism.

The protein belongs to the class I-like SAM-binding methyltransferase superfamily. RNA M5U methyltransferase family.

The chain is Zinc finger CCCH domain-containing protein 24 from Arabidopsis thaliana (Mouse-ear cress).